The chain runs to 204 residues: Large ribosomal subunit protein eL15z (204 aa).

The segment at 161–204 is disordered; it reads LRGLTSEGKKNRGLRGKGHNNHKNRPSRRATWKKNNSLSLRRYR. The segment covering 171 to 192 has biased composition (basic residues); the sequence is NRGLRGKGHNNHKNRPSRRATW. Residues 193–204 show a composition bias toward polar residues; that stretch reads KKNNSLSLRRYR.

This sequence belongs to the eukaryotic ribosomal protein eL15 family.

The chain is Large ribosomal subunit protein eL15z (RPL15A) from Arabidopsis thaliana (Mouse-ear cress).